The following is a 149-amino-acid chain: Protegrin-1 (149 aa).

The N-terminal stretch at methionine 1–alanine 29 is a signal peptide. The propeptide occupies glutamine 30–valine 130. The interval aspartate 61 to valine 80 is disordered. 4 disulfides stabilise this stretch: cysteine 85-cysteine 96, cysteine 107-cysteine 124, cysteine 136-cysteine 145, and cysteine 138-cysteine 143. Residue arginine 148 is modified to Arginine amide.

Belongs to the cathelicidin family.

Its subcellular location is the secreted. Its function is as follows. Microbicidal activity. Active against E.coli, Listeria monocytogenes and C.albicans, in vitro. This Sus scrofa (Pig) protein is Protegrin-1 (NPG1).